Here is a 716-residue protein sequence, read N- to C-terminus: Calpain clp-4 (716 aa).

The tract at residues 31-53 (DDDDKQEAPVAVSKAPKGKGSNH) is disordered. Residues 240-536 (LFEDPEFPAT…FTQMEVCNLT (297 aa)) form the Calpain catalytic domain. Catalysis depends on residues Cys-295, His-452, and Asn-476.

Belongs to the peptidase C2 family.

Its function is as follows. Calcium-regulated non-lysosomal thiol-protease which catalyzes limited proteolysis of substrates. Promotes starvation-induced muscle atrophy. This Caenorhabditis elegans protein is Calpain clp-4.